A 394-amino-acid polypeptide reads, in one-letter code: Nuclear hormone receptor family member nhr-103 (394 aa).

The segment at residues 8-83 (SGPCEICGQK…VGMDSKKFQT (76 aa)) is a DNA-binding region (nuclear receptor). Residues 11–31 (CEICGQKTSGRHFGVLSCRSC) form an NR C4-type zinc finger. The NR C4-type; degenerate zinc finger occupies 47 to 66 (QCVKGTCKIFEDGKFNCKQC). Positions 126–394 (YLVDMAKNLL…FSHPEMFETT (269 aa)) constitute an NR LBD domain.

Belongs to the nuclear hormone receptor family.

Its subcellular location is the nucleus. Functionally, orphan nuclear receptor. In Caenorhabditis elegans, this protein is Nuclear hormone receptor family member nhr-103 (nhr-103).